A 148-amino-acid polypeptide reads, in one-letter code: Hemoglobin subunit beta (148 aa).

The region spanning 3 to 148 (XWTDXERAAI…VVSALGRQYH (146 aa)) is the Globin domain. 2 residues coordinate heme b: His64 and His93.

It belongs to the globin family. As to quaternary structure, heterotetramer of two alpha chains and two beta chains. As to expression, red blood cells.

In terms of biological role, involved in oxygen transport from gills to the various peripheral tissues. The sequence is that of Hemoglobin subunit beta (hbb) from Decapterus maruadsi (Japanese scad).